A 360-amino-acid chain; its full sequence is Peptide chain release factor 1 (360 aa).

Glutamine 233 bears the N5-methylglutamine mark. The disordered stretch occupies residues 283–305; it reads KLDAERAADRRSQVGSGDRSERI.

It belongs to the prokaryotic/mitochondrial release factor family. In terms of processing, methylated by PrmC. Methylation increases the termination efficiency of RF1.

It localises to the cytoplasm. Functionally, peptide chain release factor 1 directs the termination of translation in response to the peptide chain termination codons UAG and UAA. The polypeptide is Peptide chain release factor 1 (Methylocella silvestris (strain DSM 15510 / CIP 108128 / LMG 27833 / NCIMB 13906 / BL2)).